The primary structure comprises 515 residues: 2,3-bisphosphoglycerate-independent phosphoglycerate mutase (515 aa).

Residues aspartate 14 and serine 64 each contribute to the Mn(2+) site. Serine 64 acts as the Phosphoserine intermediate in catalysis. Substrate-binding positions include histidine 125, 155-156 (RD), arginine 187, arginine 193, 263-266 (RADR), and lysine 337. 5 residues coordinate Mn(2+): aspartate 404, histidine 408, aspartate 445, histidine 446, and histidine 464.

This sequence belongs to the BPG-independent phosphoglycerate mutase family. Monomer. The cofactor is Mn(2+).

It carries out the reaction (2R)-2-phosphoglycerate = (2R)-3-phosphoglycerate. Its pathway is carbohydrate degradation; glycolysis; pyruvate from D-glyceraldehyde 3-phosphate: step 3/5. Functionally, catalyzes the interconversion of 2-phosphoglycerate and 3-phosphoglycerate. In Yersinia pseudotuberculosis serotype O:1b (strain IP 31758), this protein is 2,3-bisphosphoglycerate-independent phosphoglycerate mutase.